The sequence spans 393 residues: S-adenosylmethionine decarboxylase proenzyme (393 aa).

Active-site residues include Glu11 and Glu14. The Schiff-base intermediate with substrate; via pyruvic acid role is filled by Ser71. A Pyruvic acid (Ser); by autocatalysis modification is found at Ser71. The Proton donor; for catalytic activity role is filled by Cys85. Residues Ser236 and His249 each act as proton acceptor; for processing activity in the active site.

The protein belongs to the eukaryotic AdoMetDC family. It depends on pyruvate as a cofactor. Is synthesized initially as an inactive proenzyme. Formation of the active enzyme involves a self-maturation process in which the active site pyruvoyl group is generated from an internal serine residue via an autocatalytic post-translational modification. Two non-identical subunits are generated from the proenzyme in this reaction, and the pyruvate is formed at the N-terminus of the alpha chain, which is derived from the carboxyl end of the proenzyme. The post-translation cleavage follows an unusual pathway, termed non-hydrolytic serinolysis, in which the side chain hydroxyl group of the serine supplies its oxygen atom to form the C-terminus of the beta chain, while the remainder of the serine residue undergoes an oxidative deamination to produce ammonia and the pyruvoyl group blocking the N-terminus of the alpha chain.

The enzyme catalyses S-adenosyl-L-methionine + H(+) = S-adenosyl 3-(methylsulfanyl)propylamine + CO2. The protein operates within amine and polyamine biosynthesis; S-adenosylmethioninamine biosynthesis; S-adenosylmethioninamine from S-adenosyl-L-methionine: step 1/1. This Hordeum chilense (Barley) protein is S-adenosylmethionine decarboxylase proenzyme (SAMDC).